Reading from the N-terminus, the 382-residue chain is Galactokinase (382 aa).

34–37 (EHTD) provides a ligand contact to substrate. Position 124–130 (124–130 (GAGLSSS)) interacts with ATP. Residues S130 and E162 each contribute to the Mg(2+) site. The Proton acceptor role is filled by D174. Substrate is bound at residue Y223.

The protein belongs to the GHMP kinase family. GalK subfamily.

It is found in the cytoplasm. It carries out the reaction alpha-D-galactose + ATP = alpha-D-galactose 1-phosphate + ADP + H(+). It functions in the pathway carbohydrate metabolism; galactose metabolism. Its function is as follows. Catalyzes the transfer of the gamma-phosphate of ATP to D-galactose to form alpha-D-galactose-1-phosphate (Gal-1-P). This Aeromonas hydrophila subsp. hydrophila (strain ATCC 7966 / DSM 30187 / BCRC 13018 / CCUG 14551 / JCM 1027 / KCTC 2358 / NCIMB 9240 / NCTC 8049) protein is Galactokinase.